A 193-amino-acid polypeptide reads, in one-letter code: Guanylate kinase (193 aa).

The Guanylate kinase-like domain occupies 12-191 (DLLTIVAGPT…AANELWLAMN (180 aa)). 19–26 (GPTAVGKG) lines the ATP pocket.

Belongs to the guanylate kinase family.

The protein resides in the cytoplasm. The catalysed reaction is GMP + ATP = GDP + ADP. Essential for recycling GMP and indirectly, cGMP. The polypeptide is Guanylate kinase (Tropheryma whipplei (strain TW08/27) (Whipple's bacillus)).